We begin with the raw amino-acid sequence, 412 residues long: Acyl-[acyl-carrier-protein] hydrolase FATB3, chloroplastic (412 aa).

Residues 1–25 (MVAAAASSAFFSFPTPGTSPKPGKF) are compositionally biased toward low complexity. The transit peptide at 1–50 (MVAAAASSAFFSFPTPGTSPKPGKFGNWPSSLSIPFNPKSNHNGGIQVKA) directs the protein to the chloroplast. The tract at residues 1 to 63 (MVAAAASSAF…AHPKANGSAV (63 aa)) is disordered. Residues 28–44 (WPSSLSIPFNPKSNHNG) are compositionally biased toward polar residues. Catalysis depends on residues Asn-310, His-312, and Cys-347. The disordered stretch occupies residues 393-412 (NAGATGAVSTGKTSNGNSVS). Polar residues predominate over residues 399–412 (AVSTGKTSNGNSVS).

This sequence belongs to the acyl-ACP thioesterase family.

It is found in the plastid. It localises to the chloroplast. The catalysed reaction is tetradecanoyl-[ACP] + H2O = tetradecanoate + holo-[ACP] + H(+). Functionally, plays an essential role in chain termination during de novo fatty acid synthesis. Possesses thioesterase activity for medium chain acyl-ACPs. Main substrate is 14:0. The chain is Acyl-[acyl-carrier-protein] hydrolase FATB3, chloroplastic from Cuphea viscosissima (Blue waxweed).